The sequence spans 1616 residues: Myosin-IIIa (1616 aa).

The Protein kinase domain occupies 21–287 (WEITETIGKG…VSELLQHKFI (267 aa)). ATP-binding positions include 27 to 35 (IGKGTYGKV) and Lys-50. The active-site Proton acceptor is Asp-150. Positions 338-1053 (KDVDDLATLE…HVEQLNLMRK (716 aa)) constitute a Myosin motor domain. Residues 934–956 (LMDLLSKMVVGQPHFVRCIKPNS) are actin-binding. IQ domains are found at residues 1055-1084 (AIDKLILIQACVRAFLCSRRYQKIQEKRKE), 1082-1111 (RKESAIIIQSAARGHLVRKQRKEIVDMKNT), and 1346-1375 (EDKAAVFIQSKYRGYKRRQQLRKDKMSSFK). Positions 1401-1479 (EEINNIKKKD…RRVSSQQCLS (79 aa)) are interaction with MORN4. Disordered regions lie at residues 1545–1567 (LPSRSGPKEHSPSLRERRPQQEL) and 1581–1616 (AESPEKEEEREPAANPYDFRRLLRKTSQRRRLVQQS). 2 stretches are compositionally biased toward basic and acidic residues: residues 1550–1564 (GPKEHSPSLRERRPQ) and 1583–1592 (SPEKEEEREP). Positions 1602-1616 (LLRKTSQRRRLVQQS) are enriched in basic residues.

In the C-terminal section; belongs to the TRAFAC class myosin-kinesin ATPase superfamily. Myosin family. This sequence in the N-terminal section; belongs to the protein kinase superfamily. STE Ser/Thr protein kinase family. In terms of assembly, interacts with MORN4. Interacts (via C-terminus) with ESPN and ESPNL. Strongest expression in retina, retinal pigment epithelial cells, cochlea and pancreas.

It localises to the cytoplasm. It is found in the cytoskeleton. Its subcellular location is the cell projection. The protein localises to the filopodium tip. The protein resides in the stereocilium. The enzyme catalyses L-seryl-[protein] + ATP = O-phospho-L-seryl-[protein] + ADP + H(+). It catalyses the reaction L-threonyl-[protein] + ATP = O-phospho-L-threonyl-[protein] + ADP + H(+). The catalysed reaction is ATP + H2O = ADP + phosphate + H(+). Functionally, actin-dependent motor protein with a protein kinase activity, playing an essential role in hearing. Probably also plays a role in vision. Required for normal cochlear hair bundle development and hearing. Plays an important role in the early steps of cochlear hair bundle morphogenesis. Influences the number and lengths of stereocilia to be produced and limits the growth of microvilli within the forming auditory hair bundles thereby contributing to the architecture of the hair bundle, including its staircase pattern. Involved in the elongation of actin in stereocilia tips by transporting the actin regulatory factor ESPN to the plus ends of actin filaments. In Homo sapiens (Human), this protein is Myosin-IIIa (MYO3A).